The primary structure comprises 419 residues: Heparan-sulfate 6-O-sulfotransferase 3-B (419 aa).

Topologically, residues 1–7 (MNDKPNK) are cytoplasmic. The chain crosses the membrane as a helical; Signal-anchor for type II membrane protein span at residues 8 to 28 (WIFIPILAILFVMIGYQYVCP). Residues 29-419 (AGGQACHFRT…EDYASQVVRW (391 aa)) are Lumenal-facing. An N-linked (GlcNAc...) asparagine glycan is attached at Asn77. 101 to 109 (HIQKTGGTT) contacts 3'-phosphoadenylyl sulfate. Residues 131–132 (KK), Arg148, Trp153, and His158 each bind substrate. His158 (proton acceptor) is an active-site residue. 2 residues coordinate 3'-phosphoadenylyl sulfate: Arg191 and Ser199. Positions 203 and 210 each coordinate substrate. N-linked (GlcNAc...) asparagine glycans are attached at residues Asn270 and Asn275. Residue 323–325 (TQI) participates in 3'-phosphoadenylyl sulfate binding. An N-linked (GlcNAc...) asparagine glycan is attached at Asn326. 329-330 (RA) is a 3'-phosphoadenylyl sulfate binding site. N-linked (GlcNAc...) asparagine glycosylation is found at Asn393 and Asn402.

Belongs to the sulfotransferase 6 family. As to expression, in early somitogenesis, expressed in presumptive forebrain and midbrain, tail bud and Kupffer's vesicle. During mid-somitogenesis, ubiquitous expression which is strongest in the somites and eye. During late somitogenesis, predominantly expressed in eye, hindbrain and ventral somites. At 24 hours post-fertilization (hpf), restricted to lens and neural retina, brain, otic vesicle and somites. At 36 hpf, brain expression is restricted to telencephalon. At 48 hpf, restricted to telencephalon and pectoral fin.

It is found in the membrane. It catalyses the reaction alpha-D-glucosaminyl-[heparan sulfate](n) + 3'-phosphoadenylyl sulfate = 6-sulfo-alpha-D-glucosaminyl-[heparan sulfate](n) + adenosine 3',5'-bisphosphate + H(+). In terms of biological role, 6-O-sulfation enzyme which catalyzes the transfer of sulfate from 3'-phosphoadenosine 5'-phosphosulfate (PAPS) to position 6 of the N-sulfoglucosamine residue (GlcNS) of heparan sulfate. The protein is Heparan-sulfate 6-O-sulfotransferase 3-B of Danio rerio (Zebrafish).